A 359-amino-acid polypeptide reads, in one-letter code: Peroxisome assembly protein 12 (359 aa).

The Peroxisomal matrix segment spans residues 1-24; the sequence is MSTTIRASQLASSISPKTEEKQPS. Residues 25 to 52 traverse the membrane as a helical segment; sequence VFDIIAQENLATSIRPALQHLVKYLAFF. Over 53–56 the chain is Cytoplasmic; that stretch reads KPKT. Residues 57-81 form a helical membrane-spanning segment; it reads FLSVHRNFDEYYIIFDLILQNHYLR. Topologically, residues 82–106 are peroxisomal matrix; that stretch reads NYGASFTENFYSMKRIASGTGNPPN. The chain crosses the membrane as a helical span at residues 107–128; sequence DGRERIMSLITLVGWPYVENKL. At 129–133 the chain is on the cytoplasmic side; it reads NQLYD. The chain crosses the membrane as a helical span at residues 134–184; the sequence is RLKEVYECRSWSSINGMKAKCQKMFVIIWPYIKTALKAVKSALQLAYILNR. Topologically, residues 185–253 are peroxisomal matrix; it reads SSIHSPWLYF…ILGLPGIVSR (69 aa). Residues 254–281 form a helical membrane-spanning segment; the sequence is LFAYGLFFVQFLDYMYNTDLAKLTKTGL. Residues 282-359 lie on the Cytoplasmic side of the membrane; that stretch reads DGAIPSPPHK…NVQHLIRLFV (78 aa). Residues cysteine 307, cysteine 310, cysteine 328, and cysteine 331 each contribute to the Zn(2+) site. Residues 307-346 form an RING-type; degenerate zinc finger; sequence CPICLKKRVNDTALFVSGYVFCYTCINQYVNTYNKCPVTG.

Belongs to the pex2/pex10/pex12 family. As to quaternary structure, component of the PEX2-PEX10-PEX12 retrotranslocation channel.

The protein resides in the peroxisome membrane. It participates in protein modification; protein ubiquitination. Functionally, component of a retrotranslocation channel required for peroxisome organization by mediating export of the PEX5/prx-5 receptor from peroxisomes to the cytosol, thereby promoting PEX5/prx-5 recycling. The retrotranslocation channel is composed of PEX2/prx-2, PEX10/prx-10 and PEX12/prx-12; each subunit contributing transmembrane segments that coassemble into an open channel that specifically allows the passage of PEX5/prx-5 through the peroxisomal membrane. PEX12/prx-12 also regulates PEX5/prx-5 recycling by activating the E3 ubiquitin-protein ligase activity of PEX10/prx-10. When PEX5 recycling is compromised, PEX12/prx-12 stimulates PEX10-mediated polyubiquitination of PEX5/prx-5, leading to its subsequent degradation. The sequence is that of Peroxisome assembly protein 12 (prx-12) from Caenorhabditis elegans.